Here is a 1520-residue protein sequence, read N- to C-terminus: DNA topoisomerase 2 top-2 (1520 aa).

Residues 1–10 (MSDSDSEFSI) are compositionally biased toward acidic residues. The tract at residues 1-40 (MSDSDSEFSIEDSPKKKTAPKKEKASPKKKKDDANESMVM) is disordered. Positions 12–34 (DSPKKKTAPKKEKASPKKKKDDA) are enriched in basic and acidic residues. Residues Asn-126, Asn-155, 183–185 (SSN), 196–203 (GRNGYGAK), and 411–413 (QTK) each bind ATP. Positions 490–607 (CTLILTEGDS…SLIQRNFVEE (118 aa)) constitute a Toprim domain. Positions 496, 576, and 578 each coordinate Mg(2+). One can recognise a Topo IIA-type catalytic domain in the interval 750–1219 (IPCLVDGFKP…TWQDLWHEDL (470 aa)). The active-site O-(5'-phospho-DNA)-tyrosine intermediate is Tyr-840. The segment at 1249 to 1520 (AADAKTGRGP…RGRVVDSDSD (272 aa)) is disordered. The segment covering 1283–1320 (TKAKYEKMSQPKKERVKKEPKEPKEPKKVKKEGQDIKK) has biased composition (basic and acidic residues). Acidic residues predominate over residues 1342-1364 (MSEESDVEFDEGIDFDSDDDGVE).

It belongs to the type II topoisomerase family. As to quaternary structure, homodimer. Interacts with nmad-1; the interaction is required for localization of top-2 to DNA. Interacts with gcna-1; this interaction allows the resolution of topoisomerase 2 DNA-protein cross-links. Mg(2+) serves as cofactor. The cofactor is Mn(2+). Ca(2+) is required as a cofactor. As to expression, expressed in the hermaphrodite and male germline.

The protein resides in the nucleus. It is found in the nucleoplasm. Its subcellular location is the chromosome. It localises to the cytoplasm. The protein localises to the cytoskeleton. The protein resides in the spindle. The catalysed reaction is ATP-dependent breakage, passage and rejoining of double-stranded DNA.. In terms of biological role, control of topological states of DNA by transient breakage and subsequent rejoining of DNA strands. Topoisomerase II makes double-strand breaks. Essential during mitosis in the adult germline and during embryogenesis for proper segregation of daughter chromosomes. Required for centromere resolution during mitosis. Required for chromosome segregation in anaphase of meiosis I during spermatogenesis. Promotes cleavage furrow stability during cytokinesis upon the presence of chromatin obstructions. Promotes DNA break formation upon zygotic genome activation in the Z2 and Z3 primordial germ cells in L1 larvae, thereby activating a checkpoint response. Essential for embryogenesis. In Caenorhabditis elegans, this protein is DNA topoisomerase 2 top-2.